Here is a 406-residue protein sequence, read N- to C-terminus: Succinylornithine transaminase (406 aa).

Residue Lys-252 is modified to N6-(pyridoxal phosphate)lysine.

It belongs to the class-III pyridoxal-phosphate-dependent aminotransferase family. AstC subfamily. Pyridoxal 5'-phosphate serves as cofactor.

The enzyme catalyses N(2)-succinyl-L-ornithine + 2-oxoglutarate = N-succinyl-L-glutamate 5-semialdehyde + L-glutamate. It functions in the pathway amino-acid degradation; L-arginine degradation via AST pathway; L-glutamate and succinate from L-arginine: step 3/5. Functionally, catalyzes the transamination of N(2)-succinylornithine and alpha-ketoglutarate into N(2)-succinylglutamate semialdehyde and glutamate. Can also act as an acetylornithine aminotransferase. This is Succinylornithine transaminase from Escherichia coli O139:H28 (strain E24377A / ETEC).